The primary structure comprises 384 residues: 4-hydroxy-3-methylbut-2-en-1-yl diphosphate synthase (flavodoxin) (384 aa).

Positions 280, 283, 315, and 322 each coordinate [4Fe-4S] cluster.

This sequence belongs to the IspG family. The cofactor is [4Fe-4S] cluster.

The enzyme catalyses (2E)-4-hydroxy-3-methylbut-2-enyl diphosphate + oxidized [flavodoxin] + H2O + 2 H(+) = 2-C-methyl-D-erythritol 2,4-cyclic diphosphate + reduced [flavodoxin]. It participates in isoprenoid biosynthesis; isopentenyl diphosphate biosynthesis via DXP pathway; isopentenyl diphosphate from 1-deoxy-D-xylulose 5-phosphate: step 5/6. Converts 2C-methyl-D-erythritol 2,4-cyclodiphosphate (ME-2,4cPP) into 1-hydroxy-2-methyl-2-(E)-butenyl 4-diphosphate. This Frankia casuarinae (strain DSM 45818 / CECT 9043 / HFP020203 / CcI3) protein is 4-hydroxy-3-methylbut-2-en-1-yl diphosphate synthase (flavodoxin).